The chain runs to 76 residues: Vasotab-TY1 (76 aa).

The N-terminal stretch at 1-21 is a signal peptide; the sequence is MKFTLFSVLVVLLIATFVAAD. One can recognise a Kazal-like domain in the interval 22 to 76; the sequence is DCPRICTADFRPVCGTPSGGRRSANRTFGNQCSLDSHNCLNKGDTYDKLHDGECK. 3 disulfides stabilise this stretch: cysteine 23/cysteine 60, cysteine 27/cysteine 53, and cysteine 35/cysteine 75.

As to expression, expressed by the salivary gland.

The protein resides in the secreted. In terms of biological role, vasodilator protein that inhibits vasoconstriction of isolated rat femoral artery induced by phenylephrine. Since platelet aggregation and vasoconstriction are key hemostatic responses, particularly in small wounds, this protein likely participates in the antihemostatic responses during blood feeding. Blocks L-type calcium channels (Cav1/CACNA1) in left ventricular myocytes isolated from rat hearts. The sequence is that of Vasotab-TY1 from Tabanus yao (Horsefly).